We begin with the raw amino-acid sequence, 505 residues long: uncharacterized protein (505 aa).

Over residues 1-16 (MPPTASLTRSPPTASQ) the composition is skewed to polar residues. The segment at 1-474 (MPPTASLTRS…TPPTASLTRT (474 aa)) is disordered. Low complexity-rich tracts occupy residues 17 to 33 (TRTL…PRAS) and 40 to 59 (TASL…PPRA). Positions 66–78 (SRASLTRTLSRAS) are enriched in polar residues. Composition is skewed to low complexity over residues 96 to 122 (SLTR…PPRT), 129 to 140 (PRTSQTRTPPRA), and 147 to 158 (SRASRTRTPPRA). Polar residues-rich tracts occupy residues 165–177 (SRAS…SRAS) and 188–200 (TRTP…TRTP). Over residues 201 to 226 (PTASLTRASRTRTPPRTSQTRTPPRA) the composition is skewed to low complexity. 7 stretches are compositionally biased toward polar residues: residues 233-254 (SRAS…SRAS), 265-293 (TRTP…SLTR), 309-329 (LTRT…SLTR), 345-365 (LTRT…SLTR), 373-383 (TRTPSRASLTR), 399-408 (LTRSPPTASL), and 435-448 (LTRS…TRTP). Positions 453-474 (LRRTPPRTSLTRTPPTASLTRT) are enriched in low complexity.

This is an uncharacterized protein from Homo sapiens (Human).